The chain runs to 399 residues: MSQYRTFTAQDAVEYAKQFGGLDNPSSLVEAQEIGDGNLNLVFKIFDAQGVSRIIVKQALPYVRCVGESWPLTLDRARLEAQTLVEHYQHSPQHTVKIHHYDPELAVMVMEDLSSHKIWRGELISGVYYPQASRQLGEYLAHTLFHTSDFYLHPHAKKAQVAKYINPEMCEITEDLFFNDPYQIHERNNYPAELEADVAALRSDDQLKIAVASLKHRFFSQAEALLHGDIHSGSIFVAEDSLKAIDAEFGYYGPIGFDIGTAIGNLLLNFCGLPGHLGIRDAAAAREQRLTDIQELWNTFSERFQALATEKTRDAALSVPGYASQFLKKVWTDAIGFCGTELIRRSVGLSHVADIDTIKDDAMRHECLRHAITLGKALIVIADRIDSAEALVARVRQYS.

Residues Asn40, Lys57, and 111–113 (EDL) contribute to the ATP site. Asp229 contacts substrate. 246–248 (DAE) lines the ATP pocket. Arg344 lines the substrate pocket.

This sequence belongs to the methylthioribose kinase family. In terms of assembly, homodimer.

The enzyme catalyses 5-(methylsulfanyl)-D-ribose + ATP = 5-(methylsulfanyl)-alpha-D-ribose 1-phosphate + ADP + H(+). Its pathway is amino-acid biosynthesis; L-methionine biosynthesis via salvage pathway; S-methyl-5-thio-alpha-D-ribose 1-phosphate from S-methyl-5'-thioadenosine (hydrolase route): step 2/2. Catalyzes the phosphorylation of methylthioribose into methylthioribose-1-phosphate. In Enterobacter sp. (strain 638), this protein is Methylthioribose kinase.